We begin with the raw amino-acid sequence, 213 residues long: Phosphoribosyl-dephospho-CoA transferase (213 aa).

Catalysis depends on residues aspartate 135 and aspartate 137.

The protein belongs to the MdcG family.

The enzyme catalyses apo-[malonate decarboxylase ACP] + 2'-(5''-triphospho-alpha-D-ribosyl)-3'-dephospho-CoA = holo-[malonate decarboxylase ACP] + diphosphate. Functionally, transfers 2'-(5-triphosphoribosyl)-3'-dephosphocoenzyme-A to the apo-[acyl-carrier-protein] of the malonate decarboxylase to yield holo-[acyl-carrier-protein]. This chain is Phosphoribosyl-dephospho-CoA transferase, found in Xanthomonas axonopodis pv. citri (strain 306).